We begin with the raw amino-acid sequence, 327 residues long: AA9 family lytic polysaccharide monooxygenase G (327 aa).

Positions 1–20 are cleaved as a signal peptide; that stretch reads MKLNLASLCFLASIAPLVSG. 2 residues coordinate Cu(2+): H21 and H96. C62 and C185 form a disulfide bridge. H172 is an O2 binding site. Residue Y182 participates in Cu(2+) binding. The N-linked (GlcNAc...) asparagine glycan is linked to N290. Residues 291-327 enclose the CBM1 domain; that stretch reads GTIKKYYQCGGQGWTGSGSCEAGTSCREWNTWYFQCV.

It belongs to the polysaccharide monooxygenase AA9 family. Requires Cu(2+) as cofactor.

It is found in the secreted. It catalyses the reaction [(1-&gt;4)-beta-D-glucosyl]n+m + reduced acceptor + O2 = 4-dehydro-beta-D-glucosyl-[(1-&gt;4)-beta-D-glucosyl]n-1 + [(1-&gt;4)-beta-D-glucosyl]m + acceptor + H2O.. Its function is as follows. Lytic polysaccharide monooxygenase (LPMO) that depolymerizes crystalline and amorphous polysaccharides via the oxidation of scissile alpha- or beta-(1-4)-glycosidic bonds, yielding C1 or C4 oxidation products. Catalysis by LPMOs requires the reduction of the active-site copper from Cu(II) to Cu(I) by a reducing agent and H(2)O(2) or O(2) as a cosubstrate. The sequence is that of AA9 family lytic polysaccharide monooxygenase G from Aspergillus tamarii.